A 372-amino-acid polypeptide reads, in one-letter code: tRNA-specific 2-thiouridylase MnmA (372 aa).

Residues 16–23 (GMSGGVDS) and M42 contribute to the ATP site. The tract at residues 102-104 (NPD) is interaction with target base in tRNA. Catalysis depends on C107, which acts as the Nucleophile. A disulfide bridge links C107 with C205. G132 is an ATP binding site. Residues 155–157 (KDQ) are interaction with tRNA. C205 functions as the Cysteine persulfide intermediate in the catalytic mechanism. The segment at 317 to 318 (RY) is interaction with tRNA.

Belongs to the MnmA/TRMU family.

The protein resides in the cytoplasm. It carries out the reaction S-sulfanyl-L-cysteinyl-[protein] + uridine(34) in tRNA + AH2 + ATP = 2-thiouridine(34) in tRNA + L-cysteinyl-[protein] + A + AMP + diphosphate + H(+). In terms of biological role, catalyzes the 2-thiolation of uridine at the wobble position (U34) of tRNA, leading to the formation of s(2)U34. The protein is tRNA-specific 2-thiouridylase MnmA of Shewanella baltica (strain OS195).